A 356-amino-acid polypeptide reads, in one-letter code: Glutamine synthetase (356 aa).

The 80-residue stretch at 26-105 folds into the GS beta-grasp domain; sequence IMAEYVWVDA…VLAECWNAGG (80 aa). One can recognise a GS catalytic domain in the interval 112-356; it reads FRHDCVKVMD…TKALLQFSLA (245 aa).

Belongs to the glutamine synthetase family. In terms of assembly, homooctamer.

Its subcellular location is the cytoplasm. The enzyme catalyses L-glutamate + NH4(+) + ATP = L-glutamine + ADP + phosphate + H(+). The protein is Glutamine synthetase (GLN1) of Fusarium solani subsp. phaseoli (Nectria haematococca).